We begin with the raw amino-acid sequence, 403 residues long: MEEERGSALAAESALEKNVAELTVMDVYDIASLVGHEFERVIDQHGCEAIARLMPKVVRVLEILEVLVSRHHVAPELDELRLELDRLRLERMDRIEKERKHQKELELVEDVWRGEAQDLLSQIAQLQEENKQLMTNLSHKDVNFSEEEFQKHEGMSERERQVMKKLKEVVDKQRDEIRAKDRELGLKNEDVEALQQQQTRLMKINHDLRHRVTVVEAQGKALIEQKVELEADLQTKEQEMGSLRAELGKLRERLQGEHSQNGEEEPETEPVGEESISDAEKVAMDLKDPNRPRFTLQELRDVLHERNELKSKVFLLQEELAYYKSEEMEEENRIPQPPPIAHPRTSPQPESGIKRLFSFFSRDKKRLANTQRNVHIQESFGQWANTHRDDGYTEQGQEALQHL.

S7 is modified (phosphoserine). The region spanning 10 to 97 (AAESALEKNV…RLERMDRIEK (88 aa)) is the RH1 domain. The residue at position 47 (C47) is an S-nitrosocysteine. The stretch at 76-258 (ELDELRLELD…KLRERLQGEH (183 aa)) forms a coiled coil. Disordered regions lie at residues 254-275 (LQGEHSQNGEEEPETEPVGEES), 327-352 (EMEEENRIPQPPPIAHPRTSPQPESG), and 384-403 (ANTHRDDGYTEQGQEALQHL). S259 bears the Phosphoserine mark. A compositionally biased stretch (acidic residues) spans 262-275 (GEEEPETEPVGEES). One can recognise an RH2 domain in the interval 291–356 (RPRFTLQELR…PQPESGIKRL (66 aa)). A compositionally biased stretch (polar residues) spans 394–403 (EQGQEALQHL).

The protein belongs to the RILPL family. In terms of assembly, interacts (when S-nitrosylated) with GAPDH. Interacts with RAB8A; interaction is dependent on the phosphorylation of 'Thr-72' of RAB8A. Interacts with RAB10 and RAB12; the interaction is dependent on the phosphorylation of 'Thr-73' of RAB10, and 'Ser-105' of RAB12. S-nitrosylation is required for the interaction with GAPDH. Widely expressed. Expressed at lower level in liver and kidney.

It localises to the cytoplasm. The protein localises to the cytosol. Its subcellular location is the cytoskeleton. The protein resides in the microtubule organizing center. It is found in the centrosome. It localises to the centriole. The protein localises to the cilium basal body. Plays a role in the regulation of cell shape and polarity. Plays a role in cellular protein transport, including protein transport away from primary cilia. Neuroprotective protein, which acts by sequestring GAPDH in the cytosol and prevent the apoptotic function of GAPDH in the nucleus. Competes with SIAH1 for binding GAPDH. Does not regulate lysosomal morphology and distribution. Binds to RAB10 following LRRK2-mediated RAB10 phosphorylation which leads to inhibition of ciliogenesis. This is RILP-like protein 1 (RILPL1) from Homo sapiens (Human).